Reading from the N-terminus, the 125-residue chain is Small ribosomal subunit protein eS26 (125 aa).

It belongs to the eukaryotic ribosomal protein eS26 family.

This is Small ribosomal subunit protein eS26 (RPS26) from Sterkiella nova (Ciliate).